The primary structure comprises 126 residues: Thioredoxin-like 3-3 (126 aa).

The tract at residues 1–24 is disordered; it reads MRKQESEGANLEFESKSNDNGNVK. A Thioredoxin domain is found at 5-126; that stretch reads ESEGANLEFE…RLHDRLWLHS (122 aa). Active-site nucleophile residues include Cys55 and Cys58. A disulfide bond links Cys55 and Cys58.

Belongs to the thioredoxin family.

Functionally, probable thiol-disulfide oxidoreductase that may participate in various redox reactions. This Arabidopsis thaliana (Mouse-ear cress) protein is Thioredoxin-like 3-3.